Reading from the N-terminus, the 320-residue chain is Ribose-phosphate pyrophosphokinase (320 aa).

Residues 43–45 (DGE) and 102–103 (RQ) each bind ATP. Mg(2+) is bound by residues His-136 and Asp-178. Lys-201 is a catalytic residue. Residues Arg-203, Asp-227, and 231–235 (DTAGT) each bind D-ribose 5-phosphate.

The protein belongs to the ribose-phosphate pyrophosphokinase family. Class I subfamily. In terms of assembly, homohexamer. The cofactor is Mg(2+).

The protein resides in the cytoplasm. It catalyses the reaction D-ribose 5-phosphate + ATP = 5-phospho-alpha-D-ribose 1-diphosphate + AMP + H(+). The protein operates within metabolic intermediate biosynthesis; 5-phospho-alpha-D-ribose 1-diphosphate biosynthesis; 5-phospho-alpha-D-ribose 1-diphosphate from D-ribose 5-phosphate (route I): step 1/1. Its function is as follows. Involved in the biosynthesis of the central metabolite phospho-alpha-D-ribosyl-1-pyrophosphate (PRPP) via the transfer of pyrophosphoryl group from ATP to 1-hydroxyl of ribose-5-phosphate (Rib-5-P). The chain is Ribose-phosphate pyrophosphokinase from Clostridium tetani (strain Massachusetts / E88).